The following is a 765-amino-acid chain: uncharacterized protein (765 aa).

This is an uncharacterized protein from Methanocaldococcus jannaschii (strain ATCC 43067 / DSM 2661 / JAL-1 / JCM 10045 / NBRC 100440) (Methanococcus jannaschii).